The primary structure comprises 1059 residues: Nonsense-mediated mRNA decay factor SMG7 (1059 aa).

TPR repeat units follow at residues 149 to 183 (DQQS…LGDL) and 184 to 217 (ARYK…WPAS). Residues 806–817 (SHVSPAHSQSTS) show a composition bias toward polar residues. Disordered regions lie at residues 806 to 826 (SHVS…KWSP), 927 to 955 (HLGP…SGNN), 987 to 1015 (SGKP…QVPT), and 1040 to 1059 (STQL…RHFV).

As to quaternary structure, interacts with EXA1. As to expression, expressed in flowers and at lower levels in stems and leaves.

The protein localises to the cytoplasm. It is found in the P-body. In terms of biological role, plays multiple roles in growth and development. Involved in nonsense-mediated mRNA decay (NMD). May provide a link to the mRNA degradation machinery to initiate NMD and serve as an adapter for UPF proteins function. Required for meiotic progression through anaphase II of pollen mother cells. May counteract cyclin-dependent kinase (CDK) activity at the end of meiosis. May play a role in plant defense through its involvement in NMD. Together with EXA1, helps to restrict cell death induction during pathogen infection in a salicylic acid- (SA) and reactive oxygen species- (ROS) independent manner. This chain is Nonsense-mediated mRNA decay factor SMG7, found in Arabidopsis thaliana (Mouse-ear cress).